The sequence spans 274 residues: MKKQPIGFMDSGVGGLTLVKEARKRLPNEDMVFIGDQARLPYGEKPAATVREFAWQMANFLRHQEIKALVIACNTATAAALPDLQAQLAIPVIGVIKPGSIAALQTTHNRRVGVIATTGTIQSAAYSQQMAALNPDVQVTGLAAPQFVTMIEANQRHGQAVQTIVNQILQPLQKSEIDTLVLGCTHFPLLTTAIQTAVGPDVTLVNPAVQAITMLEEVLTQQQQLATTTPGTLRMYTTGSVAAFEEIAQQWLAQPDLTAQQVDIQKEKNDGPDR.

Substrate-binding positions include 10–11 (DS) and 42–43 (YG). Cys-73 acts as the Proton donor/acceptor in catalysis. A substrate-binding site is contributed by 74–75 (NT). Cys-184 serves as the catalytic Proton donor/acceptor. 185–186 (TH) lines the substrate pocket.

It belongs to the aspartate/glutamate racemases family.

It carries out the reaction L-glutamate = D-glutamate. It participates in cell wall biogenesis; peptidoglycan biosynthesis. Functionally, provides the (R)-glutamate required for cell wall biosynthesis. The polypeptide is Glutamate racemase (Latilactobacillus sakei subsp. sakei (strain 23K) (Lactobacillus sakei subsp. sakei)).